The following is a 494-amino-acid chain: Lipopolysaccharide core galacturonosyltransferase RgtB (494 aa).

A run of 10 helical transmembrane segments spans residues 9–29 (ISWIFALLAAYFVLQVGVRLA), 74–94 (LTALSIVKNLLLFISYLLYGL), 104–124 (ALVAIATLGLLTIPQMAFEMQ), 127–147 (LTHTVAVFFSASIFFYGFIRS), 156–176 (YLIAGIGIGFGLLAKYNFAIL), 197–217 (WRLGLTAAVALVITLPHLFWL), 251–271 (LALAIISFAALTVAVFAIVFG), 291–311 (MMLVFLAGILLLIVFGGAAGI), 316–336 (LVPMLFILPLYFCLKIEAAGV), and 345–365 (FIPVVAVIMIGVPAALYGSVA).

This sequence belongs to the glycosyltransferase 83 family.

The protein resides in the cell inner membrane. Its pathway is bacterial outer membrane biogenesis; LPS core biosynthesis. Involved in the modification of the lipopolysaccharide (LPS) inner core. Catalyzes the transfer of a galacturonic acid (GalA) residue to the 5-position of the outer Kdo (3-deoxy-D-manno-octulosonic acid) residue of the LPS inner core, using dodecaprenyl phosphate-GalA as the donor substrate. Acts after the other GalA transferase RgtA. In Rhizobium johnstonii (strain DSM 114642 / LMG 32736 / 3841) (Rhizobium leguminosarum bv. viciae), this protein is Lipopolysaccharide core galacturonosyltransferase RgtB.